The primary structure comprises 249 residues: Mediator of RNA polymerase II transcription subunit 8 (249 aa).

Residues 154 to 200 (LEEREMGIQNVVTGLRRQLEDEDEEASESEEEVEEEEMEVVGVRRRS) are a coiled coil. Residues 170 to 249 (RQLEDEDEEA…MTTGIPPTQR (80 aa)) are disordered. The segment covering 173 to 192 (EDEDEEASESEEEVEEEEME) has biased composition (acidic residues). The span at 211 to 232 (AAPAPGSRQQQQQQKAAGPAVP) shows a compositional bias: low complexity.

The protein belongs to the Mediator complex subunit 8 family. In terms of assembly, component of the Mediator complex.

The protein localises to the nucleus. In terms of biological role, component of the Mediator complex, a coactivator involved in the regulated transcription of nearly all RNA polymerase II-dependent genes. Mediator functions as a bridge to convey information from gene-specific regulatory proteins to the basal RNA polymerase II transcription machinery. Mediator is recruited to promoters by direct interactions with regulatory proteins and serves as a scaffold for the assembly of a functional preinitiation complex with RNA polymerase II and the general transcription factors. This chain is Mediator of RNA polymerase II transcription subunit 8 (med8), found in Aspergillus fumigatus (strain ATCC MYA-4609 / CBS 101355 / FGSC A1100 / Af293) (Neosartorya fumigata).